A 410-amino-acid polypeptide reads, in one-letter code: Multifunctional CCA protein (410 aa).

ATP is bound by residues Gly-8 and Arg-11. CTP-binding residues include Gly-8 and Arg-11. Positions 21 and 23 each coordinate Mg(2+). ATP is bound by residues Arg-91, Arg-137, and Arg-140. CTP-binding residues include Arg-91, Arg-137, and Arg-140. An HD domain is found at 225–326; sequence SGIHTLMTLQ…LNVLKKTDAF (102 aa).

It belongs to the tRNA nucleotidyltransferase/poly(A) polymerase family. Bacterial CCA-adding enzyme type 1 subfamily. In terms of assembly, monomer. Can also form homodimers and oligomers. Mg(2+) serves as cofactor. The cofactor is Ni(2+).

It catalyses the reaction a tRNA precursor + 2 CTP + ATP = a tRNA with a 3' CCA end + 3 diphosphate. The catalysed reaction is a tRNA with a 3' CCA end + 2 CTP + ATP = a tRNA with a 3' CCACCA end + 3 diphosphate. In terms of biological role, catalyzes the addition and repair of the essential 3'-terminal CCA sequence in tRNAs without using a nucleic acid template. Adds these three nucleotides in the order of C, C, and A to the tRNA nucleotide-73, using CTP and ATP as substrates and producing inorganic pyrophosphate. tRNA 3'-terminal CCA addition is required both for tRNA processing and repair. Also involved in tRNA surveillance by mediating tandem CCA addition to generate a CCACCA at the 3' terminus of unstable tRNAs. While stable tRNAs receive only 3'-terminal CCA, unstable tRNAs are marked with CCACCA and rapidly degraded. The chain is Multifunctional CCA protein from Neisseria gonorrhoeae (strain NCCP11945).